A 155-amino-acid chain; its full sequence is Protein U1 (155 aa).

This sequence belongs to the nanovirus U1 protein family.

This Cicer arietinum (Chickpea) protein is Protein U1 (DNA-U1).